The following is a 226-amino-acid chain: MMIKQLPENDKPKEKLIAKGAAHLADSELLAILINTGRKGHSSIEVAQDLIKMARSLKELKLLSLNDIMKVKGIGLNKAIILKAAFELGERMYIPDLDTKVKITSPQDAADYFLSRMMHLTHEQFEVLFLNSKNVVIRHEVIFVGTLNSSIVHPREVFKAAIKWSSNAIIVVHNHPSGDVTPSKEDILTTKRLQECGRVLGIELLDHIIIGDAKYLSMVEGGYFDD.

The region spanning 102 to 224 (KITSPQDAAD…YLSMVEGGYF (123 aa)) is the MPN domain. 3 residues coordinate Zn(2+): H173, H175, and D186. The JAMM motif motif lies at 173 to 186 (HNHPSGDVTPSKED).

Belongs to the UPF0758 family.

This chain is UPF0758 protein Sca_1264, found in Staphylococcus carnosus (strain TM300).